A 366-amino-acid polypeptide reads, in one-letter code: Probable neutral protease 2 homolog B (366 aa).

Residues 1–19 form the signal peptide; sequence MQVIVALAALSSLAAPALG. A propeptide spanning residues 20-189 is cleaved from the precursor; sequence FSIPRGVPVS…RGPRSRITKR (170 aa). 3 disulfide bridges follow: C197–C267, C274–C292, and C306–C366. Zn(2+) is bound at residue H317. Residue E318 is part of the active site. Zn(2+) is bound by residues H321 and D332.

It belongs to the peptidase M35 family. Zn(2+) serves as cofactor.

It is found in the secreted. The catalysed reaction is Preferential cleavage of bonds with hydrophobic residues in P1'. Also 3-Asn-|-Gln-4 and 8-Gly-|-Ser-9 bonds in insulin B chain.. Probable secreted metalloprotease that shows high activities on basic nuclear substrates such as histone and protamine. May be involved in virulence. The protein is Probable neutral protease 2 homolog B (NpII-B) of Trichophyton rubrum (Athlete's foot fungus).